The primary structure comprises 99 residues: Cell division protein FtsB (99 aa).

Residues 1-3 (MKF) are Cytoplasmic-facing. The helical transmembrane segment at 4–21 (FVITLIVLLGLLQYRLWS) threads the bilayer. Residues 22–99 (GDNSLPEYFV…GDRAVSSPSQ (78 aa)) lie on the Periplasmic side of the membrane. Residues 31–73 (VLQKQIAAQQDGNAKLNERNQVLKEEIIDLKSGTEAIEERARN) adopt a coiled-coil conformation.

Belongs to the FtsB family. In terms of assembly, part of a complex composed of FtsB, FtsL and FtsQ.

The protein resides in the cell inner membrane. Essential cell division protein. May link together the upstream cell division proteins, which are predominantly cytoplasmic, with the downstream cell division proteins, which are predominantly periplasmic. The sequence is that of Cell division protein FtsB from Shewanella oneidensis (strain ATCC 700550 / JCM 31522 / CIP 106686 / LMG 19005 / NCIMB 14063 / MR-1).